A 590-amino-acid chain; its full sequence is MVMAPIPQPWHQWPFLILFFLVLFSCESNLPCRNGVEATQRVFLYPQSPKVSSIVSKGYRTGYHFQPPKNWINDPNGPMYYNGIYHEFYQYNPNGSVWGNIVWGHSVSTDLINWIRLEPAIEGNTPSDINGCWTGSATILTGDQPVIIYTGADTEKRQVQNIVLPKNRSDPYLREWTKPKNNPLIEPVGPGLNSNQFRDPTTGWIGPDGLWRIAVGAELNGYSAALLYKSKDFMQWTRVDHPLYSSNASNMWECPDFFAVLPGKNNGLDLSAAIPNGAKHVLKMSLDSCDKYMIGVYDLKHDMFVPDTVLDDRRLWLRIDYGNYYASKSFFDSKKGRRIIWGWTNETDSTSDDVAKGWAGIHAIPRTIWLDGDGKRLLQWPIEEVESLRRNEVSHQGLELKKGDLFEIKGTDTLQADVEIDFELTSIDAADPFDPSWLLDTEKHCREADASVHGGLGPFGLVVLASDNMDEHTTVHFRVYKSEQKYMVLLCSDLRRSSLRPGLYTPAYGGFFEYDLEKEKKISLRTLIDRSAVESFGGGGRACIMARVYPAAVVDGATHMYAFNNGSSTVKVSQLKAWSMTRAQVNVRKG.

A signal peptide spans 1–28 (MVMAPIPQPWHQWPFLILFFLVLFSCES). Substrate is bound by residues 71–74 (WIND) and Gln-90. The active site involves Asp-74. The N-linked (GlcNAc...) asparagine glycan is linked to Asn-94. Residues Trp-98 and 133–134 (WT) contribute to the substrate site. Asn-167 carries an N-linked (GlcNAc...) asparagine glycan. 198-199 (RD) is a binding site for substrate. Asn-247 carries an N-linked (GlcNAc...) asparagine glycan. 2 residues coordinate substrate: Glu-253 and Asp-287. Asn-345 carries an N-linked (GlcNAc...) asparagine glycan. A disulfide bridge links Cys-445 with Cys-491. Asn-565 is a glycosylation site (N-linked (GlcNAc...) asparagine).

This sequence belongs to the glycosyl hydrolase 32 family. As to expression, expressed in leaves. Expressed at moderate levels in roots and flowers, and weakly in seeds.

It is found in the secreted. The protein localises to the extracellular space. The protein resides in the apoplast. Its subcellular location is the cell wall. The catalysed reaction is Hydrolysis of terminal non-reducing beta-D-fructofuranoside residues in beta-D-fructofuranosides.. In terms of biological role, may play a role in sucrose partitioning during seed development and in stress response. This is Beta-fructofuranosidase, insoluble isoenzyme 4 (CIN4) from Oryza sativa subsp. japonica (Rice).